The chain runs to 632 residues: tRNA 5-methylaminomethyl-2-thiouridine biosynthesis bifunctional protein MnmC (632 aa).

The interval 1–247 (MNSRIFPAAM…KWHMTLGQRL (247 aa)) is tRNA (mnm(5)s(2)U34)-methyltransferase. Residues 267-632 (VGAGLAGAAV…TDLLAQIAPR (366 aa)) are FAD-dependent cmnm(5)s(2)U34 oxidoreductase.

It in the N-terminal section; belongs to the methyltransferase superfamily. tRNA (mnm(5)s(2)U34)-methyltransferase family. In the C-terminal section; belongs to the DAO family. It depends on FAD as a cofactor.

The protein localises to the cytoplasm. The catalysed reaction is 5-aminomethyl-2-thiouridine(34) in tRNA + S-adenosyl-L-methionine = 5-methylaminomethyl-2-thiouridine(34) in tRNA + S-adenosyl-L-homocysteine + H(+). In terms of biological role, catalyzes the last two steps in the biosynthesis of 5-methylaminomethyl-2-thiouridine (mnm(5)s(2)U) at the wobble position (U34) in tRNA. Catalyzes the FAD-dependent demodification of cmnm(5)s(2)U34 to nm(5)s(2)U34, followed by the transfer of a methyl group from S-adenosyl-L-methionine to nm(5)s(2)U34, to form mnm(5)s(2)U34. The sequence is that of tRNA 5-methylaminomethyl-2-thiouridine biosynthesis bifunctional protein MnmC from Bordetella bronchiseptica (strain ATCC BAA-588 / NCTC 13252 / RB50) (Alcaligenes bronchisepticus).